We begin with the raw amino-acid sequence, 429 residues long: Histidinol dehydrogenase (429 aa).

The NAD(+) site is built by tyrosine 130, glutamine 191, and asparagine 214. Substrate-binding residues include serine 237, glutamine 259, and histidine 262. Glutamine 259 and histidine 262 together coordinate Zn(2+). Active-site proton acceptor residues include glutamate 327 and histidine 328. 4 residues coordinate substrate: histidine 328, aspartate 361, glutamate 415, and histidine 420. Aspartate 361 is a Zn(2+) binding site. Histidine 420 lines the Zn(2+) pocket.

It belongs to the histidinol dehydrogenase family. Zn(2+) serves as cofactor.

It carries out the reaction L-histidinol + 2 NAD(+) + H2O = L-histidine + 2 NADH + 3 H(+). It functions in the pathway amino-acid biosynthesis; L-histidine biosynthesis; L-histidine from 5-phospho-alpha-D-ribose 1-diphosphate: step 9/9. Its function is as follows. Catalyzes the sequential NAD-dependent oxidations of L-histidinol to L-histidinaldehyde and then to L-histidine. The chain is Histidinol dehydrogenase from Nitrobacter winogradskyi (strain ATCC 25391 / DSM 10237 / CIP 104748 / NCIMB 11846 / Nb-255).